A 248-amino-acid chain; its full sequence is uncharacterized protein (248 aa).

Position 141 (serine 141) interacts with substrate. Residue tyrosine 154 is the Proton acceptor of the active site.

The protein belongs to the short-chain dehydrogenases/reductases (SDR) family.

This is an uncharacterized protein from Methylorubrum extorquens (strain ATCC 14718 / DSM 1338 / JCM 2805 / NCIMB 9133 / AM1) (Methylobacterium extorquens).